The following is a 125-amino-acid chain: Holo-[acyl-carrier-protein] synthase (125 aa).

Residues Asp8 and Glu57 each coordinate Mg(2+).

This sequence belongs to the P-Pant transferase superfamily. AcpS family. Requires Mg(2+) as cofactor.

Its subcellular location is the cytoplasm. It carries out the reaction apo-[ACP] + CoA = holo-[ACP] + adenosine 3',5'-bisphosphate + H(+). Transfers the 4'-phosphopantetheine moiety from coenzyme A to a Ser of acyl-carrier-protein. The chain is Holo-[acyl-carrier-protein] synthase from Halothermothrix orenii (strain H 168 / OCM 544 / DSM 9562).